Reading from the N-terminus, the 145-residue chain is Small ribosomal subunit protein uS12 (145 aa).

Pro64 carries the hydroxyproline modification.

It belongs to the universal ribosomal protein uS12 family.

In Aspergillus fumigatus (strain ATCC MYA-4609 / CBS 101355 / FGSC A1100 / Af293) (Neosartorya fumigata), this protein is Small ribosomal subunit protein uS12 (rps23).